The primary structure comprises 333 residues: 3-isopropylmalate/3-methylmalate dehydrogenase (333 aa).

Substrate contacts are provided by R81, R91, R112, and D203. D203, D227, and D231 together coordinate Mg(2+). G260 to N272 contacts NAD(+).

This sequence belongs to the isocitrate and isopropylmalate dehydrogenases family. As to quaternary structure, homotetramer. The cofactor is Mg(2+). It depends on Mn(2+) as a cofactor.

The protein localises to the cytoplasm. The catalysed reaction is (2R,3S)-3-isopropylmalate + NAD(+) = 4-methyl-2-oxopentanoate + CO2 + NADH. It catalyses the reaction (2R,3S)-3-methylmalate + NAD(+) = 2-oxobutanoate + CO2 + NADH. It carries out the reaction (R)-malate + NAD(+) = pyruvate + CO2 + NADH. It functions in the pathway amino-acid biosynthesis; L-leucine biosynthesis; L-leucine from 3-methyl-2-oxobutanoate: step 3/4. Its pathway is amino-acid biosynthesis; L-isoleucine biosynthesis; 2-oxobutanoate from pyruvate: step 3/3. In terms of biological role, catalyzes the oxidation of 3-carboxy-2-hydroxy-4-methylpentanoate (3-isopropylmalate) to 3-carboxy-4-methyl-2-oxopentanoate, which decarboxylates to 4-methyl-2-oxopentanoate (2-oxoisocaproate). Also catalyzes the oxidative decarboxylation of 3-methylmalate to 2-oxobutyrate, and that of D-malate to pyruvate. Cannot use NADP(+) instead of NAD(+). Cannot catalyze the oxidation of L-malate, L-tartrate, D-tartrate, DL-isocitrate, or DL-lactate. The chain is 3-isopropylmalate/3-methylmalate dehydrogenase (leuB) from Methanocaldococcus jannaschii (strain ATCC 43067 / DSM 2661 / JAL-1 / JCM 10045 / NBRC 100440) (Methanococcus jannaschii).